A 247-amino-acid polypeptide reads, in one-letter code: NifU-like scaffold protein (247 aa).

The protein belongs to the NifU family. As to quaternary structure, homodimer.

Its subcellular location is the plastid. The protein resides in the apicoplast. It functions in the pathway cofactor biosynthesis; iron-sulfur cluster biosynthesis. Its function is as follows. Binds and transfers [4Fe-4S] iron-sulfur clusters to target proteins. The sequence is that of NifU-like scaffold protein from Plasmodium falciparum (isolate 3D7).